The primary structure comprises 909 residues: E3 ubiquitin-protein ligase HACE1 (909 aa).

The segment at 1-21 (MERAMEQLNRLTRSLRRARTV) is N-terminal helix important for homodimerization. 7 ANK repeats span residues 23–55 (LPED…NSKF), 64–93 (VKRS…NPNY), 97–126 (SGCT…DVNI), 130–159 (EGLT…DVDV), 163–192 (MGQT…DINR), 196–226 (SGAT…YLPD), and 228–253 (NGVT…QYHP). A disordered region spans residues 398-433 (QDQDAASIPPFEPPGPGSYENLSTGTRESKPDALAG). The region spanning 574–909 (NCAKLKQGIA…HCGSYGYTMA (336 aa)) is the HECT domain. Residue Cys-876 is the Glycyl thioester intermediate of the active site.

Homodimer. The homodimer is autoinhibited and stabilized by its N-terminal helix. Interacts with RAB1 (RAB1A, RAB1B or RAB1C), RAB4 (RAB4A or RAB4B) and RAB11 (RAB11A or RAB11B); in a GTP-dependent manner. Interacts with the 26S proteasomal complex through the 20S core proteasomal subunit. Interacts with RARB. In terms of processing, autoubiquitinated. In terms of tissue distribution, expressed in multiple tissues including heart, brain and kidney.

Its subcellular location is the golgi apparatus. The protein localises to the golgi stack membrane. It localises to the cytoplasm. It is found in the endoplasmic reticulum. It carries out the reaction S-ubiquitinyl-[E2 ubiquitin-conjugating enzyme]-L-cysteine + [acceptor protein]-L-lysine = [E2 ubiquitin-conjugating enzyme]-L-cysteine + N(6)-ubiquitinyl-[acceptor protein]-L-lysine.. It functions in the pathway protein modification; protein ubiquitination. With respect to regulation, sterically autoinhibited in its dimeric state. E3 ubiquitin-protein ligase involved in Golgi membrane fusion and regulation of small GTPases. Acts as a regulator of Golgi membrane dynamics during the cell cycle: recruited to Golgi membrane by Rab proteins and regulates postmitotic Golgi membrane fusion. Acts by mediating ubiquitination during mitotic Golgi disassembly, ubiquitination serving as a signal for Golgi reassembly later, after cell division. Specifically binds GTP-bound RAC1, mediating ubiquitination and subsequent degradation of active RAC1, thereby playing a role in host defense against pathogens. May also act as a transcription regulator via its interaction with RARB. The chain is E3 ubiquitin-protein ligase HACE1 (HACE1) from Homo sapiens (Human).